A 95-amino-acid polypeptide reads, in one-letter code: Putative RelE-like toxin protein (95 aa).

This sequence belongs to the RelE toxin family.

Its function is as follows. Toxic component of a type II toxin-antitoxin (TA) system. This Escherichia coli protein is Putative RelE-like toxin protein.